Here is a 548-residue protein sequence, read N- to C-terminus: (S)-beta-macrocarpene synthase (548 aa).

Asp302 and Asp306 together coordinate Mg(2+). Residues Asp302, Asp306, Arg443, and Asn446 each coordinate substrate. A DDXXD motif motif is present at residues 302 to 306 (DDTLD). Mg(2+)-binding residues include Asn446, Ser450, and Glu454.

It belongs to the terpene synthase family. As to quaternary structure, monomer. Mg(2+) serves as cofactor. The cofactor is Mn(2+). In terms of tissue distribution, expressed in roots. Not detected in leaves, unless damaged by herbivory or infected by fungi.

Its subcellular location is the cytoplasm. It carries out the reaction (S)-beta-bisabolene = (S)-beta-macrocarpene. The enzyme catalyses (2E,6E)-farnesyl diphosphate = (S)-beta-bisabolene + diphosphate. The catalysed reaction is (2E)-geranyl diphosphate = (4S)-limonene + diphosphate. It catalyses the reaction (2E)-geranyl diphosphate = beta-myrcene + diphosphate. It carries out the reaction (2E)-geranyl diphosphate = terpinolene + diphosphate. The enzyme catalyses (2E)-geranyl diphosphate + H2O = (S)-linalool + diphosphate. It functions in the pathway secondary metabolite biosynthesis; terpenoid biosynthesis. In terms of biological role, involved in the biosynthesis of the bicyclic sesquiterpene (S)-beta-macrocarpene. Can use both geranyl diphosphate and farnesyl diphosphate as substrate, but not geranylgeranyl diphosphate. Produces mainly (S)-beta-macrocarpene, but also smaller amounts of beta-bisabolene and (E)-beta-farnesene when used with farnesyl diphosphate as substrate. In the presence of geranyl diphosphate, produces the acyclic monoterpenes beta-myrcene and linalool along with minor amounts of the cyclic compounds limonene, alpha-thujene, sabinene and alpha-terpinolene. May be involved in plant defense. The polypeptide is (S)-beta-macrocarpene synthase (Zea mays (Maize)).